Here is a 476-residue protein sequence, read N- to C-terminus: RuvB-like 1 (476 aa).

Residues 1–23 form a disordered region; it reads MDMEVDEAISGTSSSRLAPIEEV. 89–96 lines the ATP pocket; the sequence is GPPATGKT.

Belongs to the RuvB family. Forms homohexameric rings. May form a dodecamer with ruvb-2 made of two stacked hexameric rings. As to expression, expressed in gonadal cells.

It is found in the cytoplasm. Its subcellular location is the nucleus. The catalysed reaction is ATP + H2O = ADP + phosphate + H(+). Its function is as follows. Possesses single-stranded DNA-stimulated ATPase and ATP dependent DNA helicase (3' to 5') activity suggesting a role in nuclear processes such as recombination and transcription. May participate in several chromatin remodeling complexes that mediate the ATP-dependent exchange of histones and remodel chromatin by shifting nucleosomes. Involvement in these complexes is likely required for transcriptional activation of selected genes and DNA repair in response to DNA damage. Involved in the Ce-Tor signaling pathway whereby it is required for the accumulation and localization of box C/D snoRNP to nucleoli to regulate ribosomal maturation and thus protein synthesis. Antagonizes the transcriptional activity of transcription factor pha-4, to control postembryonic development and adult longevity. Has a role in pharyngeal development. Has a role in gonadal development. This chain is RuvB-like 1, found in Caenorhabditis elegans.